The following is a 298-amino-acid chain: UDP-N-acetylenolpyruvoylglucosamine reductase (298 aa).

One can recognise an FAD-binding PCMH-type domain in the interval 27–191; that stretch reads TGGEADVFVM…LDATFSLALE (165 aa). The active site involves Arg-170. The active-site Proton donor is the Ser-220. Residue Glu-290 is part of the active site.

This sequence belongs to the MurB family. FAD serves as cofactor.

The protein localises to the cytoplasm. The enzyme catalyses UDP-N-acetyl-alpha-D-muramate + NADP(+) = UDP-N-acetyl-3-O-(1-carboxyvinyl)-alpha-D-glucosamine + NADPH + H(+). The protein operates within cell wall biogenesis; peptidoglycan biosynthesis. In terms of biological role, cell wall formation. In Listeria monocytogenes serotype 4a (strain HCC23), this protein is UDP-N-acetylenolpyruvoylglucosamine reductase.